The following is a 245-amino-acid chain: Eukaryotic translation initiation factor 6 (245 aa).

Tyrosine 113 is modified (phosphotyrosine). Threonine 165 bears the Phosphothreonine mark. Serine 166 is modified (phosphoserine). Residues serine 174 and serine 175 each carry the phosphoserine; by CK1 modification. A Phosphoserine; by PKC modification is found at serine 235. Residues serine 239 and serine 243 each carry the phosphoserine modification.

The protein belongs to the eIF-6 family. As to quaternary structure, monomer. Associates with the 60S ribosomal subunit. Interacts with RACK1. Interacts with DICER1, AGO2, TARBP2, MOV10 and RPL7A; they form a large RNA-induced silencing complex (RISC). Post-translationally, phosphorylation at Ser-174 and Ser-175 by CSNK1D/CK1 promotes nuclear export. Ufmylated by UFL1.

Its subcellular location is the cytoplasm. It localises to the nucleus. The protein localises to the nucleolus. Binds to the 60S ribosomal subunit and prevents its association with the 40S ribosomal subunit to form the 80S initiation complex in the cytoplasm. Behaves as a stimulatory translation initiation factor downstream insulin/growth factors. Is also involved in ribosome biogenesis. Associates with pre-60S subunits in the nucleus and is involved in its nuclear export. Cytoplasmic release of TIF6 from 60S subunits and nuclear relocalization is promoted by a RACK1 (RACK1)-dependent protein kinase C activity. In tissues responsive to insulin, controls fatty acid synthesis and glycolysis by exerting translational control of adipogenic transcription factors such as CEBPB, CEBPD and ATF4 that have G/C rich or uORF in their 5'UTR. Required for ROS-dependent megakaryocyte maturation and platelets formation, controls the expression of mitochondrial respiratory chain genes involved in reactive oxygen species (ROS) synthesis. Involved in miRNA-mediated gene silencing by the RNA-induced silencing complex (RISC). Required for both miRNA-mediated translational repression and miRNA-mediated cleavage of complementary mRNAs by RISC. Modulates cell cycle progression and global translation of pre-B cells, its activation seems to be rate-limiting in tumorigenesis and tumor growth. This Rattus norvegicus (Rat) protein is Eukaryotic translation initiation factor 6 (Eif6).